Here is a 665-residue protein sequence, read N- to C-terminus: Beta-galactosidase LacZ (665 aa).

Arg-110 contributes to the substrate binding site. Cys-114 contributes to the Zn(2+) binding site. Asn-148 provides a ligand contact to substrate. The Proton donor role is filled by Glu-149. Zn(2+) is bound by residues Cys-157, Cys-159, and Cys-162. Glu-303 (nucleophile) is an active-site residue. Substrate-binding positions include Trp-311 and 351-354 (EKFH).

The protein belongs to the glycosyl hydrolase 42 family.

The catalysed reaction is Hydrolysis of terminal non-reducing beta-D-galactose residues in beta-D-galactosides.. In Heyndrickxia coagulans (Weizmannia coagulans), this protein is Beta-galactosidase LacZ.